The following is a 485-amino-acid chain: Glutamyl-tRNA(Gln) amidotransferase subunit A (485 aa).

Active-site charge relay system residues include Lys-78 and Ser-153. The active-site Acyl-ester intermediate is Ser-177.

The protein belongs to the amidase family. GatA subfamily. As to quaternary structure, heterotrimer of A, B and C subunits.

The catalysed reaction is L-glutamyl-tRNA(Gln) + L-glutamine + ATP + H2O = L-glutaminyl-tRNA(Gln) + L-glutamate + ADP + phosphate + H(+). In terms of biological role, allows the formation of correctly charged Gln-tRNA(Gln) through the transamidation of misacylated Glu-tRNA(Gln) in organisms which lack glutaminyl-tRNA synthetase. The reaction takes place in the presence of glutamine and ATP through an activated gamma-phospho-Glu-tRNA(Gln). The sequence is that of Glutamyl-tRNA(Gln) amidotransferase subunit A from Bacillus cereus (strain 03BB102).